Reading from the N-terminus, the 204-residue chain is uncharacterized protein (204 aa).

Residues 1–10 (MQQAITQQEK) are compositionally biased toward polar residues. Disordered regions lie at residues 1-20 (MQQAITQQEKAQPKSVLPNR) and 70-99 (DEARKLAEQQRIEDATRTQSKTTEDMKNTE). One can recognise an SPOR domain in the interval 131 to 204 (VRDSKKFGLQ…TVTDCVVIGM (74 aa)).

The protein to E.coli FtsN repeat regions.

This is an uncharacterized protein from Haemophilus influenzae (strain ATCC 51907 / DSM 11121 / KW20 / Rd).